Consider the following 477-residue polypeptide: Oxidative stress-induced growth inhibitor 1 (477 aa).

The residue at position 12 (S12) is a Phosphoserine.

Belongs to the OKL38 family. NADPH serves as cofactor. Ubiquitous. Highest expression in the ovary, testis, kidney, skeletal muscle and liver.

The protein localises to the midbody. Monooxygenase catalytic activity. Involved in regulation of cytokinesis; promotes RHOA activity, probably acting locally at the midbody in late cytokinesis. Monooxygenase activity is involved in stabilizing transient structures between daughter cells, termed intercellular bridges, before abscission. Regulates differentiation and proliferation through the regulation of cell death. This is Oxidative stress-induced growth inhibitor 1 from Homo sapiens (Human).